A 132-amino-acid chain; its full sequence is MAMTDPLGDMLTRIRNGAARRKSSVSTPASKLRARVLDVLQAEGYIRGYSEVEFGNGKAELNIELKYYEGASVIREIARVSKPGRRVYVSVKSIPQVANGLGITILSTPKGVMADHQAREQNVGGELLCSVF.

This sequence belongs to the universal ribosomal protein uS8 family. Part of the 30S ribosomal subunit. Contacts proteins S5 and S12.

Its function is as follows. One of the primary rRNA binding proteins, it binds directly to 16S rRNA central domain where it helps coordinate assembly of the platform of the 30S subunit. In Sinorhizobium fredii (strain NBRC 101917 / NGR234), this protein is Small ribosomal subunit protein uS8.